The following is a 172-amino-acid chain: Mitochondrial import inner membrane translocase subunit Tim17-B (172 aa).

Residues Cys-9 and Cys-78 are joined by a disulfide bond. 3 consecutive transmembrane segments (helical) span residues 17–37 (CGGAFTMGVIGGGVFQAIKGF), 61–77 (QIGGSFAVWGGLFSTID), and 113–133 (VGSAMMGGILLALIEGVGILL). A disordered region spans residues 147 to 172 (FLEDPSQLTPKEGSPAPGYPNYQQYH).

This sequence belongs to the Tim17/Tim22/Tim23 family. As to quaternary structure, component of the TIM23 complex at least composed of TIMM23, TIMM17 (TIMM17A or TIMM17B) and TIMM50. The complex interacts with the TIMM44 component of the PAM complex. The complex also interacts with DNAJC15.

Its subcellular location is the mitochondrion inner membrane. Its function is as follows. Essential component of the TIM23 complex, a complex that mediates the translocation of transit peptide-containing proteins across the mitochondrial inner membrane. The polypeptide is Mitochondrial import inner membrane translocase subunit Tim17-B (Timm17b) (Mus musculus (Mouse)).